Consider the following 507-residue polypeptide: CWF19-like protein DRN1 (507 aa).

Residue Ser-242 is modified to Phosphoserine.

This sequence belongs to the CWF19 family. As to quaternary structure, interacts with DBR1. Interacts with SYF1, a component of the NTC complex. Interacts with lariat-introns and lariat-intermediates.

It localises to the nucleus. The protein resides in the cytoplasm. Its function is as follows. Involved in branched RNA metabolism, modulating the turnover of lariat-intron pre-mRNAs by the lariat-debranching enzyme DBR1. Enhances the debranching activity of DBR1 in vitro. The protein is CWF19-like protein DRN1 (DRN1) of Saccharomyces cerevisiae (strain ATCC 204508 / S288c) (Baker's yeast).